A 972-amino-acid chain; its full sequence is Macrophage colony-stimulating factor 1 receptor (972 aa).

Positions 1 to 19 (MGPGVLLLLLVATAWHGQG) are cleaved as a signal peptide. The Extracellular segment spans residues 20–517 (IPVIEPSVPE…HPPDEFLFTP (498 aa)). 5 consecutive Ig-like C2-type domains span residues 21 to 104 (PVIE…VKDP), 107 to 197 (PWNV…KVQK), 203 to 290 (PALT…HSTS), 299 to 399 (AYLN…LTLR), and 402 to 502 (PEVS…IPIS). 3 cysteine pairs are disulfide-bonded: Cys-42-Cys-84, Cys-127-Cys-177, and Cys-224-Cys-278. Asn-45, Asn-73, Asn-153, Asn-240, Asn-275, Asn-302, Asn-335, Asn-353, Asn-412, Asn-428, and Asn-480 each carry an N-linked (GlcNAc...) asparagine glycan. A disulfide bridge connects residues Cys-419 and Cys-485. Residues 518–538 (VVVACMSIMALLLLLLLLLLY) traverse the membrane as a helical segment. Over 539-972 (KYKQKPKYQV…LLQPNNYQFC (434 aa)) the chain is Cytoplasmic. Residues 542 to 574 (QKPKYQVRWKIIESYEGNSYTFIDPTQLPYNEK) form a regulatory juxtamembrane domain region. Phosphotyrosine; by autocatalysis is present on residues Tyr-546 and Tyr-561. Residues 582 to 910 (LQFGKTLGAG…PTFQQICSFL (329 aa)) enclose the Protein kinase domain. ATP is bound by residues 588–596 (LGAGAFGKV) and Lys-616. A phosphotyrosine; by autocatalysis mark is found at Tyr-699 and Tyr-708. Ser-713 bears the Phosphoserine mark. The residue at position 723 (Tyr-723) is a Phosphotyrosine; by autocatalysis. Asp-778 functions as the Proton acceptor in the catalytic mechanism. The tract at residues 796-818 (DFGLARDIMNDSNYIVKGNARLP) is activation loop. Phosphotyrosine; by autocatalysis is present on residues Tyr-809 and Tyr-923. The tract at residues 918-950 (RRERDYTNLPSSSRSGGSGSSSSELEEESSSEH) is disordered. A compositionally biased stretch (low complexity) spans 928-940 (SSSRSGGSGSSSS). Tyr-969 carries the post-translational modification Phosphotyrosine; by autocatalysis.

Belongs to the protein kinase superfamily. Tyr protein kinase family. CSF-1/PDGF receptor subfamily. Interacts with INPPL1/SHIP2 and THOC5. Monomer. Homodimer. Interacts with CSF1 and IL34. Interaction with dimeric CSF1 or IL34 leads to receptor homodimerization. Interacts (tyrosine phosphorylated) with PLCG2 (via SH2 domain). Interacts (tyrosine phosphorylated) with PIK3R1 (via SH2 domain). Interacts (tyrosine phosphorylated) with FYN, YES1 and SRC (via SH2 domain). Interacts (tyrosine phosphorylated) with CBL, GRB2 and SLA2. Autophosphorylated in response to CSF1 or IL34 binding. Phosphorylation at Tyr-561 is important for normal down-regulation of signaling by ubiquitination, internalization and degradation. Phosphorylation at Tyr-561 and Tyr-809 is important for interaction with SRC family members, including FYN, YES1 and SRC, and for subsequent activation of these protein kinases. Phosphorylation at Tyr-699 and Tyr-923 is important for interaction with GRB2. Phosphorylation at Tyr-723 is important for interaction with PIK3R1. Phosphorylation at Tyr-708 is important for normal receptor degradation. Phosphorylation at Tyr-723 and Tyr-809 is important for interaction with PLCG2. Phosphorylation at Tyr-969 is important for interaction with CBL. Dephosphorylation by PTPN2 negatively regulates downstream signaling and macrophage differentiation. In terms of processing, ubiquitinated. Becomes rapidly polyubiquitinated after autophosphorylation, leading to its degradation. As to expression, expressed in bone marrow and in differentiated blood mononuclear cells.

It is found in the cell membrane. It catalyses the reaction L-tyrosyl-[protein] + ATP = O-phospho-L-tyrosyl-[protein] + ADP + H(+). Its activity is regulated as follows. Present in an inactive conformation in the absence of bound ligand. CSF1 or IL34 binding leads to dimerization and activation by autophosphorylation on tyrosine residues. Inhibited by imatinib/STI-571 (Gleevec), dasatinib, sunitinib/SU11248, lestaurtinib/CEP-701, midostaurin/PKC-412, Ki20227, linifanib/ABT-869, Axitinib/AG013736, sorafenib/BAY 43-9006 and GW2580. Its function is as follows. Tyrosine-protein kinase that acts as a cell-surface receptor for CSF1 and IL34 and plays an essential role in the regulation of survival, proliferation and differentiation of hematopoietic precursor cells, especially mononuclear phagocytes, such as macrophages and monocytes. Promotes the release of pro-inflammatory chemokines in response to IL34 and CSF1, and thereby plays an important role in innate immunity and in inflammatory processes. Plays an important role in the regulation of osteoclast proliferation and differentiation, the regulation of bone resorption, and is required for normal bone and tooth development. Required for normal male and female fertility, and for normal development of milk ducts and acinar structures in the mammary gland during pregnancy. Promotes reorganization of the actin cytoskeleton, regulates formation of membrane ruffles, cell adhesion and cell migration, and promotes cancer cell invasion. Activates several signaling pathways in response to ligand binding, including the ERK1/2 and the JNK pathway. Phosphorylates PIK3R1, PLCG2, GRB2, SLA2 and CBL. Activation of PLCG2 leads to the production of the cellular signaling molecules diacylglycerol and inositol 1,4,5-trisphosphate, that then lead to the activation of protein kinase C family members, especially PRKCD. Phosphorylation of PIK3R1, the regulatory subunit of phosphatidylinositol 3-kinase, leads to activation of the AKT1 signaling pathway. Activated CSF1R also mediates activation of the MAP kinases MAPK1/ERK2 and/or MAPK3/ERK1, and of the SRC family kinases SRC, FYN and YES1. Activated CSF1R transmits signals both via proteins that directly interact with phosphorylated tyrosine residues in its intracellular domain, or via adapter proteins, such as GRB2. Promotes activation of STAT family members STAT3, STAT5A and/or STAT5B. Promotes tyrosine phosphorylation of SHC1 and INPP5D/SHIP-1. Receptor signaling is down-regulated by protein phosphatases, such as INPP5D/SHIP-1, that dephosphorylate the receptor and its downstream effectors, and by rapid internalization of the activated receptor. In the central nervous system, may play a role in the development of microglia macrophages. This is Macrophage colony-stimulating factor 1 receptor (CSF1R) from Homo sapiens (Human).